Here is a 373-residue protein sequence, read N- to C-terminus: Cathecol O-methyltransferase 1 (373 aa).

S-adenosyl-L-homocysteine contacts are provided by glycine 209, aspartate 232, aspartate 252, methionine 253, methionine 265, and lysine 266. Aspartate 232 provides a ligand contact to S-adenosyl-L-methionine. Histidine 279 serves as the catalytic Proton acceptor.

The protein belongs to the class I-like SAM-binding methyltransferase superfamily. Cation-independent O-methyltransferase family. COMT subfamily.

The enzyme catalyses catechol + S-adenosyl-L-methionine = guaiacol + S-adenosyl-L-homocysteine + H(+). Its function is as follows. O-methyltransferase that catalyzes the conversion of catechol to guaiacol. Involved in the production of guaiacol in fruits. The sequence is that of Cathecol O-methyltransferase 1 from Solanum lycopersicum (Tomato).